The chain runs to 485 residues: NADH-quinone oxidoreductase subunit N (485 aa).

The next 14 helical transmembrane spans lie at 8-28, 35-55, 75-95, 105-125, 127-147, 159-179, 203-223, 235-255, 271-291, 303-323, 326-346, 371-393, 406-426, and 449-469; these read LIALLPLLIVGLTVVVVMLCI, FINSTLTVIGINLALLSLWFV, FYTGLVLVASLATSTLAYAWL, FYLLVLIATMGGILLASANHL, ALFLGIELISLPLFGMVGYAF, YTLLSAAAASFLLFGMALVYA, LLAGLGMMVVGLGFKLSLVPF, PVPVSTFLATASKIAIFAVVM, LVLAIIAFASMLFGNLMALSQ, IAHLGYLLVGLIVVQAHTLAL, VGVYLAGYLFASLGAFGVVSL, LLSSVLTVMMLSLAGIPMTLGFI, HLGWLTGAVVAGSAIGLFYYL, and ALTAGGVVVLISSLLVLLLGL.

This sequence belongs to the complex I subunit 2 family. NDH-1 is composed of 13 different subunits. Subunits NuoA, H, J, K, L, M, N constitute the membrane sector of the complex.

It is found in the cell inner membrane. It catalyses the reaction a quinone + NADH + 5 H(+)(in) = a quinol + NAD(+) + 4 H(+)(out). NDH-1 shuttles electrons from NADH, via FMN and iron-sulfur (Fe-S) centers, to quinones in the respiratory chain. The immediate electron acceptor for the enzyme in this species is believed to be ubiquinone. Couples the redox reaction to proton translocation (for every two electrons transferred, four hydrogen ions are translocated across the cytoplasmic membrane), and thus conserves the redox energy in a proton gradient. The polypeptide is NADH-quinone oxidoreductase subunit N (Sodalis glossinidius (strain morsitans)).